Consider the following 442-residue polypeptide: Serine--tRNA ligase (442 aa).

An L-serine-binding site is contributed by 249–251; that stretch reads TSE. 280 to 282 serves as a coordination point for ATP; the sequence is RSE. E303 is a binding site for L-serine. An ATP-binding site is contributed by 367–370; that stretch reads EISS. S402 serves as a coordination point for L-serine.

The protein belongs to the class-II aminoacyl-tRNA synthetase family. Type-1 seryl-tRNA synthetase subfamily. Homodimer. The tRNA molecule binds across the dimer.

It is found in the cytoplasm. The catalysed reaction is tRNA(Ser) + L-serine + ATP = L-seryl-tRNA(Ser) + AMP + diphosphate + H(+). It catalyses the reaction tRNA(Sec) + L-serine + ATP = L-seryl-tRNA(Sec) + AMP + diphosphate + H(+). The protein operates within aminoacyl-tRNA biosynthesis; selenocysteinyl-tRNA(Sec) biosynthesis; L-seryl-tRNA(Sec) from L-serine and tRNA(Sec): step 1/1. In terms of biological role, catalyzes the attachment of serine to tRNA(Ser). Is also able to aminoacylate tRNA(Sec) with serine, to form the misacylated tRNA L-seryl-tRNA(Sec), which will be further converted into selenocysteinyl-tRNA(Sec). The polypeptide is Serine--tRNA ligase (Acidovorax ebreus (strain TPSY) (Diaphorobacter sp. (strain TPSY))).